Consider the following 652-residue polypeptide: Chaperone protein HtpG (652 aa).

Positions 1–351 (MTEHVEQLEF…AQDLSLNVSR (351 aa)) are a; substrate-binding. The segment at 352–568 (EILQQDRQIQ…VFDFTPMLER (217 aa)) is b. The interval 569-652 (MYRASGQPVP…ILTDRLTRTL (84 aa)) is c.

The protein belongs to the heat shock protein 90 family. In terms of assembly, homodimer.

The protein localises to the cytoplasm. Molecular chaperone. Has ATPase activity. The sequence is that of Chaperone protein HtpG from Nocardia farcinica (strain IFM 10152).